A 57-amino-acid chain; its full sequence is Large ribosomal subunit protein bL32 (57 aa).

Residues 1-20 (MAVQQRRSSKHRRDKRRSHD) are disordered. The span at 7-18 (RSSKHRRDKRRS) shows a compositional bias: basic residues.

This sequence belongs to the bacterial ribosomal protein bL32 family.

This is Large ribosomal subunit protein bL32 (rpmF) from Mycoplasma genitalium (strain ATCC 33530 / DSM 19775 / NCTC 10195 / G37) (Mycoplasmoides genitalium).